We begin with the raw amino-acid sequence, 314 residues long: S-methyl-5'-thioadenosine phosphorylase (314 aa).

Phosphate contacts are provided by residues Ser31, 73 to 74, and 106 to 107; these read RH and SA. Position 207 (Met207) interacts with substrate. Thr208 contacts phosphate. Residue 231 to 233 coordinates substrate; that stretch reads DYD.

Belongs to the PNP/MTAP phosphorylase family. MTAP subfamily. In terms of assembly, homohexamer. Dimer of a homotrimer.

The enzyme catalyses S-methyl-5'-thioadenosine + phosphate = 5-(methylsulfanyl)-alpha-D-ribose 1-phosphate + adenine. The protein operates within amino-acid biosynthesis; L-methionine biosynthesis via salvage pathway; S-methyl-5-thio-alpha-D-ribose 1-phosphate from S-methyl-5'-thioadenosine (phosphorylase route): step 1/1. In terms of biological role, catalyzes the reversible phosphorylation of S-methyl-5'-thioadenosine (MTA) to adenine and 5-methylthioribose-1-phosphate. Involved in the breakdown of MTA, a major by-product of polyamine biosynthesis. Responsible for the first step in the methionine salvage pathway after MTA has been generated from S-adenosylmethionine. Has broad substrate specificity with 6-aminopurine nucleosides as preferred substrates. The chain is S-methyl-5'-thioadenosine phosphorylase from Prochlorococcus marinus (strain SARG / CCMP1375 / SS120).